Consider the following 555-residue polypeptide: Formate--tetrahydrofolate ligase (555 aa).

65–72 lines the ATP pocket; sequence TPAGEGKT.

Belongs to the formate--tetrahydrofolate ligase family.

The enzyme catalyses (6S)-5,6,7,8-tetrahydrofolate + formate + ATP = (6R)-10-formyltetrahydrofolate + ADP + phosphate. It participates in one-carbon metabolism; tetrahydrofolate interconversion. The polypeptide is Formate--tetrahydrofolate ligase (Paracoccus denitrificans (strain Pd 1222)).